The sequence spans 380 residues: GTP-binding protein 10 (380 aa).

Positions 13 to 148 (GNFVDNVRLY…RNIRLDLKLI (136 aa)) constitute an Obg domain. Positions 149–344 (ADFGLVGFPN…LKSLIRQSLE (196 aa)) constitute an OBG-type G domain. Residues 155 to 162 (GFPNAGKS), 202 to 206 (DLPGL), and 278 to 281 (NKMD) contribute to the GTP site.

It belongs to the TRAFAC class OBG-HflX-like GTPase superfamily. OBG GTPase family.

The protein localises to the nucleus. It localises to the nucleolus. May be involved in the ribosome maturation process. This chain is GTP-binding protein 10 (gtpbp10), found in Danio rerio (Zebrafish).